The following is a 94-amino-acid chain: Integration host factor subunit beta (94 aa).

This sequence belongs to the bacterial histone-like protein family. As to quaternary structure, heterodimer of an alpha and a beta chain.

In terms of biological role, this protein is one of the two subunits of integration host factor, a specific DNA-binding protein that functions in genetic recombination as well as in transcriptional and translational control. The protein is Integration host factor subunit beta of Caulobacter sp. (strain K31).